The primary structure comprises 440 residues: Chromosome partition protein MukF (440 aa).

The segment at 208 to 236 is leucine-zipper; sequence LSETSGTLRELQDTLDAAGDKLQANLLRI.

Belongs to the MukF family. In terms of assembly, interacts, and probably forms a ternary complex, with MukE and MukB via its C-terminal region. The complex formation is stimulated by calcium or magnesium. It is required for an interaction between MukE and MukB.

It localises to the cytoplasm. Its subcellular location is the nucleoid. Functionally, involved in chromosome condensation, segregation and cell cycle progression. May participate in facilitating chromosome segregation by condensation DNA from both sides of a centrally located replisome during cell division. Not required for mini-F plasmid partitioning. Probably acts via its interaction with MukB and MukE. Overexpression results in anucleate cells. It has a calcium binding activity. This is Chromosome partition protein MukF from Klebsiella pneumoniae subsp. pneumoniae (strain ATCC 700721 / MGH 78578).